The chain runs to 233 residues: Orotidine 5'-phosphate decarboxylase (233 aa).

Substrate is bound by residues Asp-10, Lys-32, 59–68, Thr-119, Arg-180, Gln-189, Gly-209, and Arg-210; that span reads DLKFHDIPNT. Lys-61 acts as the Proton donor in catalysis.

The protein belongs to the OMP decarboxylase family. Type 1 subfamily. In terms of assembly, homodimer.

The catalysed reaction is orotidine 5'-phosphate + H(+) = UMP + CO2. It participates in pyrimidine metabolism; UMP biosynthesis via de novo pathway; UMP from orotate: step 2/2. Its function is as follows. Catalyzes the decarboxylation of orotidine 5'-monophosphate (OMP) to uridine 5'-monophosphate (UMP). This is Orotidine 5'-phosphate decarboxylase from Pasteurella multocida (strain Pm70).